Reading from the N-terminus, the 692-residue chain is Methionine--tRNA ligase (692 aa).

A 'HIGH' region motif is present at residues 26 to 36 (PYANGSIHLGH). Zn(2+) contacts are provided by C157, C160, C170, and C173. The 'KMSKS' region motif lies at 342-346 (KMSKS). K345 serves as a coordination point for ATP. The tRNA-binding domain occupies 590 to 692 (DFAKVDLRIA…SGAQPGMRVK (103 aa)).

It belongs to the class-I aminoacyl-tRNA synthetase family. MetG type 1 subfamily. In terms of assembly, homodimer. Zn(2+) is required as a cofactor.

It localises to the cytoplasm. It catalyses the reaction tRNA(Met) + L-methionine + ATP = L-methionyl-tRNA(Met) + AMP + diphosphate. Its function is as follows. Is required not only for elongation of protein synthesis but also for the initiation of all mRNA translation through initiator tRNA(fMet) aminoacylation. The chain is Methionine--tRNA ligase from Methylobacillus flagellatus (strain ATCC 51484 / DSM 6875 / VKM B-1610 / KT).